Here is a 142-residue protein sequence, read N- to C-terminus: Ribonuclease VapC31 (142 aa).

Positions 3-139 (LLDANVLLAA…ARFASVRHIR (137 aa)) constitute a PINc domain. The Mg(2+) site is built by D5 and D108.

The protein belongs to the PINc/VapC protein family. Requires Mg(2+) as cofactor.

In terms of biological role, toxic component of a type II toxin-antitoxin (TA) system. An RNase. Its toxic effect is neutralized by coexpression with cognate antitoxin VapB31. The chain is Ribonuclease VapC31 from Mycobacterium tuberculosis (strain CDC 1551 / Oshkosh).